The sequence spans 200 residues: Vacuolar iron transporter homolog 1 (200 aa).

Topologically, residues methionine 1–alanine 34 are cytoplasmic. Residues valine 35 to valine 55 form a helical membrane-spanning segment. The Vacuolar segment spans residues lysine 56–methionine 62. Residues isoleucine 63 to valine 83 form a helical membrane-spanning segment. At serine 84–alanine 116 the chain is on the cytoplasmic side. Residues alanine 117–valine 137 form a helical membrane-spanning segment. Topologically, residues lysine 138–arginine 143 are vacuolar. A helical transmembrane segment spans residues isoleucine 144–valine 164. Residues leucine 165–arginine 176 lie on the Cytoplasmic side of the membrane. The helical transmembrane segment at valine 177–threonine 197 threads the bilayer. Topologically, residues histidine 198–leucine 200 are vacuolar.

It belongs to the CCC1 family. In terms of tissue distribution, expressed in the vascular bundles of the shoot and the stele of the root. Expressed in inflorescences and at lower levels in leaves.

It is found in the vacuole membrane. The catalysed reaction is Fe(2+)(in) = Fe(2+)(out). In terms of biological role, vacuolar iron transporter involved in the transfer of iron ions from the cytosol to the vacuole for intracellular iron storage. Involved in regulation of cellular iron homeostasis. Vacuolar iron storage is required for seed embryo and seedling development. This chain is Vacuolar iron transporter homolog 1, found in Arabidopsis thaliana (Mouse-ear cress).